The following is a 679-amino-acid chain: Protein hook (679 aa).

Residues 6–123 (NEMYYSLLEW…RLLQLVLGCA (118 aa)) form the Calponin-homology (CH) domain. 2 coiled-coil regions span residues 135–437 (EIMC…LKCG) and 480–574 (QTAL…QEIL).

Belongs to the hook family. Homodimer. Interacts with microtubules via its N-terminus.

The protein localises to the cytoplasm. The protein resides in the cytoskeleton. It is found in the endosome. It localises to the synapse. Functionally, involved in endocytic trafficking by stabilizing organelles of the endocytic pathway. Probably acts as a cytoskeletal linker protein required to tether endosome vesicles to the cytoskeleton. Involved in modulation of endocytosis at stages required for down-regulation of membrane proteins that control synapse size. Not involved in synaptic vesicle recycling. Required in R7 cells for boss endocytosis into multivesicular bodies (MVBs). Has a role in regulating adult longevity. This Drosophila erecta (Fruit fly) protein is Protein hook.